The chain runs to 495 residues: Glucose-6-phosphate 1-dehydrogenase (495 aa).

NADP(+) is bound by residues 11 to 18 (GASGDLAK), Arg-45, 84 to 85 (DV), and Lys-147. 4 residues coordinate substrate: His-177, Lys-181, Glu-215, and Asp-234. The active-site Proton acceptor is the His-239. Substrate-binding residues include Lys-339 and Lys-344.

The protein belongs to the glucose-6-phosphate dehydrogenase family.

The enzyme catalyses D-glucose 6-phosphate + NADP(+) = 6-phospho-D-glucono-1,5-lactone + NADPH + H(+). Its pathway is carbohydrate degradation; pentose phosphate pathway; D-ribulose 5-phosphate from D-glucose 6-phosphate (oxidative stage): step 1/3. Its function is as follows. Catalyzes the oxidation of glucose 6-phosphate to 6-phosphogluconolactone. The polypeptide is Glucose-6-phosphate 1-dehydrogenase (Streptococcus pneumoniae serotype 4 (strain ATCC BAA-334 / TIGR4)).